The following is a 201-amino-acid chain: uncharacterized protein (201 aa).

May have a role in tissue tropism within the insect larvae. This is an uncharacterized protein from Lepidoptera (butterflies and moths).